Reading from the N-terminus, the 410-residue chain is uncharacterized protein (410 aa).

Polar residues predominate over residues 178–187 (QKNHRNQLST). Disordered regions lie at residues 178–203 (QKNH…QEHQ) and 236–272 (RAEQ…PTVQ). Over residues 188-198 (QKKQQQALQKA) the composition is skewed to low complexity. The segment covering 236 to 263 (RAEQAAREQEKREREALAQRQKAEEKRT) has biased composition (basic and acidic residues).

This is an uncharacterized protein from Haemophilus influenzae (strain ATCC 51907 / DSM 11121 / KW20 / Rd).